The sequence spans 97 residues: uncharacterized protein (97 aa).

This is an uncharacterized protein from Emericella nidulans (Aspergillus nidulans).